A 765-amino-acid polypeptide reads, in one-letter code: Putative ankyrin repeat protein L371 (765 aa).

9 ANK repeats span residues 60–89, 93–122, 132–161, 165–194, 198–227, 232–261, 265–295, 322–353, and 357–395; these read NGNY…RLDV, EGNS…KIIG, KGSV…NANY, DNVN…NLNA, QGST…DQNI, LDFY…NPNH, EGNT…RCRS, DGLT…NLNY, and TGNT…GKTV.

The sequence is that of Putative ankyrin repeat protein L371 from Acanthamoeba polyphaga mimivirus (APMV).